We begin with the raw amino-acid sequence, 73 residues long: Beta-defensin 50 (73 aa).

A signal peptide spans 1–23; the sequence is MKTLCFLLLTSGLLYLMVKGVGS. Disulfide bonds link cysteine 34/cysteine 63 and cysteine 46/cysteine 64.

The protein belongs to the beta-defensin family. As to expression, highly expressed in prostate. Not expressed in uterus, epididymis, ovary, testis, spleen, submaxillary gland, thymus, thyroid, pancreas, smooth muscle, skeletal muscle, heart, kidney, lung, liver, eye and brain.

The protein localises to the secreted. Its function is as follows. Has bactericidal activity. The polypeptide is Beta-defensin 50 (Defb50) (Mus musculus (Mouse)).